The chain runs to 91 residues: Small ribosomal subunit protein bS20 (91 aa).

This sequence belongs to the bacterial ribosomal protein bS20 family.

Its function is as follows. Binds directly to 16S ribosomal RNA. This Caulobacter sp. (strain K31) protein is Small ribosomal subunit protein bS20.